The chain runs to 569 residues: Dihydroorotate dehydrogenase (quinone), mitochondrial (569 aa).

The N-terminal 23 residues, 1–23 (MISKLKPQFMFLPKKHILSYCRK), are a transit peptide targeting the mitochondrion. A helical membrane pass occupies residues 143-163 (IIFLLFVSLFGLYGFFESYNP). FMN contacts are provided by residues 225 to 229 (AGFDK) and T249. K229 provides a ligand contact to substrate. Substrate contacts are provided by residues 274 to 278 (NSCGF) and N342. N342 is an FMN binding site. The active-site Nucleophile is the S345. N347 lines the substrate pocket. K429 is a binding site for FMN. 458 to 459 (NT) provides a ligand contact to substrate. Residues 477–478 (SG), 505–507 (SGG), and 528–529 (YS) each bind FMN.

It belongs to the dihydroorotate dehydrogenase family. Type 2 subfamily. As to quaternary structure, monomer. FMN serves as cofactor.

It is found in the mitochondrion inner membrane. It carries out the reaction (S)-dihydroorotate + a quinone = orotate + a quinol. The protein operates within pyrimidine metabolism; UMP biosynthesis via de novo pathway; orotate from (S)-dihydroorotate (quinone route): step 1/1. In terms of biological role, catalyzes the conversion of dihydroorotate to orotate with quinone as electron acceptor. In Plasmodium falciparum (isolate 3D7), this protein is Dihydroorotate dehydrogenase (quinone), mitochondrial.